The primary structure comprises 261 residues: Ribonuclease PH (261 aa).

Phosphate contacts are provided by residues Arg-87 and 125–127 (GTR).

It belongs to the RNase PH family. As to quaternary structure, homohexameric ring arranged as a trimer of dimers.

It carries out the reaction tRNA(n+1) + phosphate = tRNA(n) + a ribonucleoside 5'-diphosphate. Functionally, phosphorolytic 3'-5' exoribonuclease that plays an important role in tRNA 3'-end maturation. Removes nucleotide residues following the 3'-CCA terminus of tRNAs; can also add nucleotides to the ends of RNA molecules by using nucleoside diphosphates as substrates, but this may not be physiologically important. Probably plays a role in initiation of 16S rRNA degradation (leading to ribosome degradation) during starvation. This is Ribonuclease PH from Caldanaerobacter subterraneus subsp. tengcongensis (strain DSM 15242 / JCM 11007 / NBRC 100824 / MB4) (Thermoanaerobacter tengcongensis).